A 270-amino-acid polypeptide reads, in one-letter code: Chymotrypsin-like elastase family member 3A (270 aa).

The or 16 signal peptide spans 1–15; that stretch reads MMLRLLSSLLLVAVA. The propeptide at 16–28 is activation peptide; the sequence is SGYGPPSSHSSSR. In terms of domain architecture, Peptidase S1 spans 29–268; the sequence is VVHGEDAVPY…FIDWIEETIA (240 aa). Cysteines 58 and 74 form a disulfide. Catalysis depends on His-73, which acts as the Charge relay system. A glycan (N-linked (GlcNAc...) asparagine) is linked at Asn-114. An intrachain disulfide couples Cys-117 to Cys-120. Catalysis depends on Asp-123, which acts as the Charge relay system. Disulfide bonds link Cys-157-Cys-223, Cys-188-Cys-204, and Cys-213-Cys-244. Ser-217 (charge relay system) is an active-site residue.

It belongs to the peptidase S1 family. Elastase subfamily.

It catalyses the reaction Preferential cleavage: Ala-|-Xaa. Does not hydrolyze elastin.. Functionally, efficient protease with alanine specificity but only little elastolytic activity. This is Chymotrypsin-like elastase family member 3A (CELA3A) from Homo sapiens (Human).